We begin with the raw amino-acid sequence, 351 residues long: Prostaglandin reductase 2 (351 aa).

Position 99 to 100 (99 to 100 (FY)) interacts with substrate. Residues 165–168 (GACG), Lys-192, Tyr-208, Asn-231, 253–259 (CGQISQY), 287–289 (FTV), and Asn-337 contribute to the NADP(+) site. A substrate-binding site is contributed by 288–290 (TVL).

Belongs to the NADP-dependent oxidoreductase L4BD family. Monomer. Widely expressed with highest levels in adipose tissues.

It is found in the cytoplasm. The catalysed reaction is 13,14-dihydro-15-oxo-prostaglandin E2 + NAD(+) = 15-oxoprostaglandin E2 + NADH + H(+). The enzyme catalyses 13,14-dihydro-15-oxo-prostaglandin E2 + NADP(+) = 15-oxoprostaglandin E2 + NADPH + H(+). It catalyses the reaction 13,14-dihydro-15-oxo-PGF2alpha + NADP(+) = 15-oxoprostaglandin F2alpha + NADPH + H(+). It carries out the reaction 13,14-dihydro-15-oxo-prostaglandin E1 + NADP(+) = 15-oxoprostaglandin E1 + NADPH + H(+). The catalysed reaction is 13,14-dihydro-15-oxo-prostaglandin F1alpha + NADP(+) = 15-oxoprostaglandin F1alpha + NADPH + H(+). In terms of biological role, functions as 15-oxo-prostaglandin 13-reductase and acts on 15-keto-PGE1, 15-keto-PGE2, 15-keto-PGE1-alpha and 15-keto-PGE2-alpha with highest activity towards 15-keto-PGE2. Overexpression represses transcriptional activity of PPARG and inhibits adipocyte differentiation. The chain is Prostaglandin reductase 2 from Mus musculus (Mouse).